A 372-amino-acid polypeptide reads, in one-letter code: Cytochrome b (372 aa).

A run of 4 helical transmembrane segments spans residues 25–45 (FGSMLLTCLMLQITTGFFLAI), 69–90 (WIMQNLHAISASMFFICIYIHI), 105–125 (WLSGTALLITLMATAFFGYVL), and 170–190 (FFALHFILPFAIMALSSIHII). Heme b contacts are provided by histidine 75 and histidine 89. Heme b contacts are provided by histidine 174 and histidine 188. Position 193 (histidine 193) interacts with a ubiquinone. 4 consecutive transmembrane segments (helical) span residues 218-238 (YKDMLMFTSMITLLFITLSFS), 280-300 (LGGALALLMSVMILTTVPFTH), 312-332 (LSQILFWTLMATFITITWTAS), and 339-358 (FISISQTTSIFYFSFFITIP).

The protein belongs to the cytochrome b family. In terms of assembly, the cytochrome bc1 complex contains 3 respiratory subunits (MT-CYB, CYC1 and UQCRFS1), 2 core proteins (UQCRC1 and UQCRC2) and probably 6 low-molecular weight proteins. Heme b is required as a cofactor.

Its subcellular location is the mitochondrion inner membrane. In terms of biological role, component of the ubiquinol-cytochrome c reductase complex (complex III or cytochrome b-c1 complex) that is part of the mitochondrial respiratory chain. The b-c1 complex mediates electron transfer from ubiquinol to cytochrome c. Contributes to the generation of a proton gradient across the mitochondrial membrane that is then used for ATP synthesis. The protein is Cytochrome b (MT-CYB) of Naja annulata annulata (Banded water cobra).